A 416-amino-acid polypeptide reads, in one-letter code: UDP-N-acetylglucosamine 1-carboxyvinyltransferase (416 aa).

Position 22–23 (22–23 (KN)) interacts with phosphoenolpyruvate. R91 lines the UDP-N-acetyl-alpha-D-glucosamine pocket. C115 serves as the catalytic Proton donor. C115 carries the post-translational modification 2-(S-cysteinyl)pyruvic acid O-phosphothioketal. UDP-N-acetyl-alpha-D-glucosamine-binding positions include 120 to 124 (RPIDL), D305, and I327.

Belongs to the EPSP synthase family. MurA subfamily.

The protein localises to the cytoplasm. It catalyses the reaction phosphoenolpyruvate + UDP-N-acetyl-alpha-D-glucosamine = UDP-N-acetyl-3-O-(1-carboxyvinyl)-alpha-D-glucosamine + phosphate. The protein operates within cell wall biogenesis; peptidoglycan biosynthesis. Functionally, cell wall formation. Adds enolpyruvyl to UDP-N-acetylglucosamine. The chain is UDP-N-acetylglucosamine 1-carboxyvinyltransferase from Buchnera aphidicola subsp. Acyrthosiphon pisum (strain APS) (Acyrthosiphon pisum symbiotic bacterium).